The sequence spans 456 residues: MRKSPGLSDYLWAWILLLSTLTGRSYGQPSLQDELKDNTTVFTRILDRLLDGYDNRLRPGLGERVTEVKTDIFVTSFGPVSDHDMEYTIDVFFRQSWKDERLKFKGPMTVLRLNNLMASKIWTPDTFFHNGKKSVAHNMTMPNKLLRITEDGTLLYTMRLTVRAECPMHLEDFPMDAHACPLKFGSYAYTRAEVVYEWTREPARSVVVAEDGSRLNQYDLLGQTVDSGIVQSSTGEYVVMTTHFHLKRKIGYFVIQTYLPCIMTVILSQVSFWLNRESVPARTVFGVTTVLTMTTLSISARNSLPKVAYATAMDWFIAVCYAFVFSALIEFATVNYFTKRGYAWDGKSVVPEKPKKVKDPLIKKNNTYAPTATSYTPNLARGDPGLATIAKSATIEPKEVKPETKPPEPKKTFNSVSKIDRLSRIAFPLLFGIFNLVYWATYLNREPQLKAPTPHQ.

The N-terminal stretch at 1-27 (MRKSPGLSDYLWAWILLLSTLTGRSYG) is a signal peptide. The Extracellular segment spans residues 28 to 253 (QPSLQDELKD…FHLKRKIGYF (226 aa)). The N-linked (GlcNAc...) asparagine glycan is linked to Asn-38. Arg-94 is a binding site for 4-aminobutanoate. N-linked (GlcNAc...) asparagine glycosylation occurs at Asn-138. Position 157 (Thr-157) interacts with 4-aminobutanoate. Cys-166 and Cys-180 are joined by a disulfide. Residues 254–274 (VIQTYLPCIMTVILSQVSFWL) form a helical membrane-spanning segment. Topologically, residues 275-279 (NRESV) are cytoplasmic. Residues 280–301 (PARTVFGVTTVLTMTTLSISAR) traverse the membrane as a helical segment. At 302-311 (NSLPKVAYAT) the chain is on the extracellular side. Residues 312-333 (AMDWFIAVCYAFVFSALIEFAT) traverse the membrane as a helical segment. Residues 334–421 (VNYFTKRGYA…TFNSVSKIDR (88 aa)) are Cytoplasmic-facing. A helical transmembrane segment spans residues 422-441 (LSRIAFPLLFGIFNLVYWAT). The Extracellular portion of the chain corresponds to 442–456 (YLNREPQLKAPTPHQ).

The protein belongs to the ligand-gated ion channel (TC 1.A.9) family. Gamma-aminobutyric acid receptor (TC 1.A.9.5) subfamily. GABRA1 sub-subfamily. In terms of assembly, heteropentamer, formed by a combination of alpha (GABRA1-6), beta (GABRB1-3), gamma (GABRG1-3), delta (GABRD), epsilon (GABRE), rho (GABRR1-3), pi (GABRP) and theta (GABRQ) subunits, each subunit exhibiting distinct physiological and pharmacological properties. Interacts with UBQLN1. Interacts with TRAK1. Interacts with KIF21B. Identified in a complex of 720 kDa composed of LHFPL4, NLGN2, GABRA1, GABRB2, GABRG2 and GABRB3. Interacts with LHFPL4. Interacts with NLGN2. Interacts with SHISA7; interaction leads to the regulation of GABA(A) receptor trafficking, channel deactivation kinetics and pharmacology.

It is found in the postsynaptic cell membrane. The protein localises to the cell membrane. Its subcellular location is the cytoplasmic vesicle membrane. It catalyses the reaction chloride(in) = chloride(out). With respect to regulation, allosterically activated by benzodiazepines, the neuroanesthetic alphaxalone and pentobarbital. Inhibited by the antagonist bicuculline. Potentiated by histamine. Alpha subunit of the heteropentameric ligand-gated chloride channel gated by gamma-aminobutyric acid (GABA), a major inhibitory neurotransmitter in the brain. GABA-gated chloride channels, also named GABA(A) receptors (GABAAR), consist of five subunits arranged around a central pore and contain GABA active binding site(s) located at the alpha and beta subunit interface(s). When activated by GABA, GABAARs selectively allow the flow of chloride anions across the cell membrane down their electrochemical gradient. Alpha-1/GABRA1-containing GABAARs are largely synaptic. Chloride influx into the postsynaptic neuron following GABAAR opening decreases the neuron ability to generate a new action potential, thereby reducing nerve transmission. GABAARs containing alpha-1 and beta-2 or -3 subunits exhibit synaptogenic activity; the gamma-2 subunit being necessary but not sufficient to induce rapid synaptic contacts formation. GABAARs function also as histamine receptor where histamine binds at the interface of two neighboring beta subunits and potentiates GABA response. GABAARs containing alpha, beta and epsilon subunits also permit spontaneous chloride channel activity while preserving the structural information required for GABA-gated openings. Alpha-1-mediated plasticity in the orbitofrontal cortex regulates context-dependent action selection. Together with rho subunits, may also control neuronal and glial GABAergic transmission in the cerebellum. In Macaca fascicularis (Crab-eating macaque), this protein is Gamma-aminobutyric acid receptor subunit alpha-1 (GABRA1).